A 383-amino-acid polypeptide reads, in one-letter code: BRISC and BRCA1-A complex member 2 (383 aa).

M1 carries the N-acetylmethionine modification. S2 carries the post-translational modification Phosphoserine. UEV-like stretches follow at residues 30–147 (DATN…TLLE) and 275–364 (IAAF…RAKA).

It belongs to the BABAM2 family. Component of the ARISC complex, at least composed of UIMC1/RAP80, ABRAXAS1, BRCC3/BRCC36, BABAM2 and BABAM1/NBA1. Component of the BRCA1-A complex, at least composed of BRCA1, BARD1, UIMC1/RAP80, ABRAXAS1, BRCC3/BRCC36, BABAM2 and BABAM1/NBA1. In the BRCA1-A complex, interacts directly with ABRAXAS1, BRCC3/BRCC36 and BABAM1/NBA1. Binds polyubiquitin. Component of the BRISC complex, at least composed of ABRAXAS2, BRCC3/BRCC36, BABAM2 and BABAM1/NBA1. Identified in a complex with SHMT2 and the other subunits of the BRISC complex. Component of the BRCA1/BRCA2 containing complex (BRCC), which also contains BRCA1, BRCA2, BARD1, BRCC3/BRCC36 and RAD51. BRCC is a ubiquitin E3 ligase complex that enhances cellular survival following DNA damage. May interact with FAS and TNFRSF1A. In terms of tissue distribution, expressed in all cell lines examined. Highly expressed in placenta.

It is found in the cytoplasm. Its subcellular location is the nucleus. In terms of biological role, component of the BRCA1-A complex, a complex that specifically recognizes 'Lys-63'-linked ubiquitinated histones H2A and H2AX at DNA lesions sites, leading to target the BRCA1-BARD1 heterodimer to sites of DNA damage at double-strand breaks (DSBs). The BRCA1-A complex also possesses deubiquitinase activity that specifically removes 'Lys-63'-linked ubiquitin on histones H2A and H2AX. In the BRCA1-A complex, it acts as an adapter that bridges the interaction between BABAM1/NBA1 and the rest of the complex, thereby being required for the complex integrity and modulating the E3 ubiquitin ligase activity of the BRCA1-BARD1 heterodimer. Component of the BRISC complex, a multiprotein complex that specifically cleaves 'Lys-63'-linked ubiquitin in various substrates. Within the BRISC complex, acts as an adapter that bridges the interaction between BABAM1/NBA1 and the rest of the complex, thereby being required for the complex integrity. The BRISC complex is required for normal mitotic spindle assembly and microtubule attachment to kinetochores via its role in deubiquitinating NUMA1. The BRISC complex plays a role in interferon signaling via its role in the deubiquitination of the interferon receptor IFNAR1; deubiquitination increases IFNAR1 activity by enhancing its stability and cell surface expression. Down-regulates the response to bacterial lipopolysaccharide (LPS) via its role in IFNAR1 deubiquitination. May play a role in homeostasis or cellular differentiation in cells of neural, epithelial and germline origins. May also act as a death receptor-associated anti-apoptotic protein, which inhibits the mitochondrial apoptotic pathway. May regulate TNF-alpha signaling through its interactions with TNFRSF1A; however these effects may be indirect. In Homo sapiens (Human), this protein is BRISC and BRCA1-A complex member 2.